Here is a 530-residue protein sequence, read N- to C-terminus: Calnexin homolog 1 (530 aa).

The N-terminal stretch at 1–20 (MRQRQLFSVFLLLLAFVSFQ) is a signal peptide. The Lumenal segment spans residues 21 to 466 (KLCYCDDQTV…EKAEQQPNLT (446 aa)). Ca(2+) is bound by residues Ser-34 and Asp-65. A disulfide bond links Cys-108 and Cys-143. 4 residues coordinate an alpha-D-glucoside: Tyr-112, Lys-114, Tyr-134, and Asp-141. A disordered region spans residues 216-315 (ALIPAKTIPD…KCEAAPGCGE (100 aa)). The tract at residues 223 to 356 (IPDPEDKKPE…RDIPNPDYFE (134 aa)) is p domain (Extended arm). The span at 224–240 (PDPEDKKPEDWDERAKI) shows a compositional bias: basic and acidic residues. 5 repeat units span residues 225-236 (DPEDKKPEDWDE), 242-253 (DPNAVKPEDWDE), 261-272 (DEEAEKPEGWLD), 280-291 (DPEATKPEDWDD), and 295-305 (GMWEAPKIDNP). 4 X approximate repeats stretches follow at residues 225-291 (DPED…DWDD) and 295-352 (GMWE…IPNP). The segment covering 250-281 (DWDEDAPMEIEDEEAEKPEGWLDDEPEEVDDP) has biased composition (acidic residues). Cys-307 and Cys-313 are oxidised to a cystine. 3 tandem repeats follow at residues 314-324 (GEWKRPMKRNP), 328-338 (GKWSSPLIDNP), and 342-352 (GIWKPRDIPNP). Glu-371 contacts an alpha-D-glucoside. Residue Asp-382 participates in Ca(2+) binding. The N-linked (GlcNAc...) asparagine glycan is linked to Asn-464. Residues 467–487 (IGVLVAIVVVFFSLFLKLIFG) form a helical membrane-spanning segment. Over 488-530 (GKKAAAPVEKKKPEVAESSKSGDEAEKKEETAAPRKRQPRRDN) the chain is Cytoplasmic. The disordered stretch occupies residues 490–530 (KAAAPVEKKKPEVAESSKSGDEAEKKEETAAPRKRQPRRDN). A compositionally biased stretch (basic and acidic residues) spans 495-520 (VEKKKPEVAESSKSGDEAEKKEETAA). Ser-508 bears the Phosphoserine mark. The segment covering 521–530 (PRKRQPRRDN) has biased composition (basic residues).

Belongs to the calreticulin family.

It is found in the endoplasmic reticulum membrane. In terms of biological role, calcium-binding protein that interacts with newly synthesized monoglucosylated glycoproteins in the endoplasmic reticulum. It may act in assisting protein assembly and/or in the retention within the ER of unassembled protein subunits. It seems to play a major role in the quality control apparatus of the ER by the retention of incorrectly folded proteins. In Arabidopsis thaliana (Mouse-ear cress), this protein is Calnexin homolog 1 (CNX1).